Here is a 394-residue protein sequence, read N- to C-terminus: Elongation factor Tu (394 aa).

The 195-residue stretch at 10 to 204 (KPHVNIGTIG…AVDSWIPLPE (195 aa)) folds into the tr-type G domain. The interval 19-26 (GHVDHGKT) is G1. 19-26 (GHVDHGKT) provides a ligand contact to GTP. T26 provides a ligand contact to Mg(2+). Residues 60–64 (GITIN) are G2. The segment at 81-84 (DCPG) is G3. GTP is bound by residues 81 to 85 (DCPGH) and 136 to 139 (NKCD). The tract at residues 136–139 (NKCD) is G4. Positions 174–176 (SGL) are G5.

This sequence belongs to the TRAFAC class translation factor GTPase superfamily. Classic translation factor GTPase family. EF-Tu/EF-1A subfamily. In terms of assembly, monomer.

Its subcellular location is the cytoplasm. It catalyses the reaction GTP + H2O = GDP + phosphate + H(+). In terms of biological role, GTP hydrolase that promotes the GTP-dependent binding of aminoacyl-tRNA to the A-site of ribosomes during protein biosynthesis. The chain is Elongation factor Tu from Ureaplasma urealyticum serovar 10 (strain ATCC 33699 / Western).